The sequence spans 79 residues: Small ribosomal subunit protein uS17 (79 aa).

The protein belongs to the universal ribosomal protein uS17 family. In terms of assembly, part of the 30S ribosomal subunit.

Its function is as follows. One of the primary rRNA binding proteins, it binds specifically to the 5'-end of 16S ribosomal RNA. The polypeptide is Small ribosomal subunit protein uS17 (Rhodospirillum rubrum (strain ATCC 11170 / ATH 1.1.1 / DSM 467 / LMG 4362 / NCIMB 8255 / S1)).